A 242-amino-acid polypeptide reads, in one-letter code: C-reactive protein 3.3 (242 aa).

A signal peptide spans M1–A24. A Pentraxin (PTX) domain is found at I30–C241. Phosphocholine-binding residues include T60 and Y63. Intrachain disulfides connect C62/C125 and C112/C144. Ca(2+) is bound by residues D85 and N86. An N-linked (GlcNAc...) asparagine glycan is attached at N147. Ca(2+) is bound by residues Q169, D170, and Q180. A disulfide bond links C207 and C241.

The protein belongs to the pentraxin family. In terms of assembly, homopentamer. Pentraxin (or pentaxin) have a discoid arrangement of 5 non-covalently bound subunits. Requires Ca(2+) as cofactor.

It is found in the secreted. Functionally, might serve the role of immunoglobulins. The chain is C-reactive protein 3.3 from Limulus polyphemus (Atlantic horseshoe crab).